Reading from the N-terminus, the 126-residue chain is Large ribosomal subunit protein eL32 (126 aa).

The protein belongs to the eukaryotic ribosomal protein eL32 family. Part of the 50S ribosomal subunit.

The sequence is that of Large ribosomal subunit protein eL32 (rpl32e) from Thermococcus kodakarensis (strain ATCC BAA-918 / JCM 12380 / KOD1) (Pyrococcus kodakaraensis (strain KOD1)).